Here is a 478-residue protein sequence, read N- to C-terminus: Sialidase-4 (478 aa).

Residues 22 to 25 carry the FRIP motif motif; that stretch reads YRVP. Positions 23 and 43 each coordinate substrate. Catalysis depends on proton acceptor residues D47 and D48. One copy of the BNR 1 repeat lies at 127–138; that stretch reads VTSCDAGLTWGS. Positions 177 and 179 each coordinate substrate. The stretch at 200-211 is one BNR 2 repeat; it reads FYSDDHGISWHC. Substrate is bound by residues E222 and R238. A BNR 3 repeat occupies 247–258; it reads ALSADEGTSFLP. Disordered stretches follow at residues 285-307 and 335-359; these read IEPQ…CFNL and SRSP…PECP. R383 serves as a coordination point for substrate. Catalysis depends on Y413, which acts as the Nucleophile. E434 is an active-site residue.

The protein belongs to the glycosyl hydrolase 33 family. In terms of tissue distribution, highly expressed in brain, particularly in hippocampus, and at lower levels in liver and spleen. Expressed in hippocampal neurons (at protein level).

The protein resides in the cell membrane. It localises to the endoplasmic reticulum membrane. The protein localises to the microsome membrane. It is found in the mitochondrion inner membrane. Its subcellular location is the mitochondrion outer membrane. The protein resides in the cell projection. It localises to the neuron projection. The protein localises to the lysosome lumen. It carries out the reaction Hydrolysis of alpha-(2-&gt;3)-, alpha-(2-&gt;6)-, alpha-(2-&gt;8)- glycosidic linkages of terminal sialic acid residues in oligosaccharides, glycoproteins, glycolipids, colominic acid and synthetic substrates.. The enzyme catalyses a ganglioside GM3 + H2O = a beta-D-galactosyl-(1-&gt;4)-beta-D-glucosyl-(1&lt;-&gt;1)-ceramide + N-acetylneuraminate. The catalysed reaction is a ganglioside GM3 (d18:1(4E)) + H2O = a beta-D-Gal-(1-&gt;4)-beta-D-Glc-(1&lt;-&gt;1)-Cer(d18:1(4E)) + N-acetylneuraminate. It catalyses the reaction a ganglioside GM2 + H2O = a ganglioside GA2 + N-acetylneuraminate. It carries out the reaction a ganglioside GM2 (d18:1(4E)) + H2O = a ganglioside GA2 (d18:1(4E)) + N-acetylneuraminate. The enzyme catalyses a ganglioside GD1a + H2O = a ganglioside GM1 + N-acetylneuraminate. The catalysed reaction is a ganglioside GD1a (d18:1(4E)) + H2O = a ganglioside GM1 (d18:1(4E)) + N-acetylneuraminate. It catalyses the reaction a ganglioside GD3 + H2O = a ganglioside GM3 + N-acetylneuraminate. It carries out the reaction a ganglioside GD3 (d18:1(4E)) + H2O = a ganglioside GM3 (d18:1(4E)) + N-acetylneuraminate. Functionally, exo-alpha-sialidase that catalyzes the hydrolytic cleavage of the terminal sialic acid (N-acetylneuraminic acid, Neu5Ac) of a glycan moiety in the catabolism of glycolipids, glycoproteins and oligosacharides. Efficiently hydrolyzes gangliosides including alpha-(2-&gt;3)-sialylated GD1a and GM3 and alpha-(2-&gt;8)-sialylated GD3. Hydrolyzes poly-alpha-(2-&gt;8)-sialylated neural cell adhesion molecule NCAM1 likely at growth cones, suppressing neurite outgrowth in hippocampal neurons. May desialylate sialyl Lewis A and X antigens at the cell surface, down-regulating these glycan epitopes recognized by SELE/E selectin in the initiation of cell adhesion and extravasation. Has sialidase activity toward mucin, fetuin and sialyllactose. The chain is Sialidase-4 (Neu4) from Mus musculus (Mouse).